The following is a 373-amino-acid chain: tRNA-specific 2-thiouridylase MnmA (373 aa).

ATP is bound by residues 12–19 and methionine 38; that span reads GMSGGVDS. An interaction with target base in tRNA region spans residues 98 to 100; the sequence is NPD. Cysteine 103 (nucleophile) is an active-site residue. Cysteines 103 and 200 form a disulfide. Glycine 127 contributes to the ATP binding site. Residues 150–152 are interaction with tRNA; sequence KDQ. Cysteine 200 functions as the Cysteine persulfide intermediate in the catalytic mechanism. The segment at 312 to 313 is interaction with tRNA; the sequence is RY.

This sequence belongs to the MnmA/TRMU family.

Its subcellular location is the cytoplasm. The catalysed reaction is S-sulfanyl-L-cysteinyl-[protein] + uridine(34) in tRNA + AH2 + ATP = 2-thiouridine(34) in tRNA + L-cysteinyl-[protein] + A + AMP + diphosphate + H(+). Catalyzes the 2-thiolation of uridine at the wobble position (U34) of tRNA, leading to the formation of s(2)U34. The sequence is that of tRNA-specific 2-thiouridylase MnmA from Streptococcus pyogenes serotype M18 (strain MGAS8232).